Reading from the N-terminus, the 550-residue chain is Hydroxylamine reductase (550 aa).

Residues Cys3, Cys6, Cys18, and Cys25 each coordinate [2Fe-2S] cluster. Hybrid [4Fe-2O-2S] cluster-binding residues include His249, Glu273, Cys317, Cys405, Cys433, Cys458, Glu492, and Lys494. Cysteine persulfide is present on Cys405.

It belongs to the HCP family. Requires [2Fe-2S] cluster as cofactor. It depends on hybrid [4Fe-2O-2S] cluster as a cofactor.

It is found in the cytoplasm. It carries out the reaction A + NH4(+) + H2O = hydroxylamine + AH2 + H(+). Its function is as follows. Catalyzes the reduction of hydroxylamine to form NH(3) and H(2)O. The chain is Hydroxylamine reductase from Salmonella choleraesuis (strain SC-B67).